The primary structure comprises 102 residues: Large ribosomal subunit protein uL23 (102 aa).

It belongs to the universal ribosomal protein uL23 family. In terms of assembly, part of the 50S ribosomal subunit. Contacts protein L29, and trigger factor when it is bound to the ribosome.

Its function is as follows. One of the early assembly proteins it binds 23S rRNA. One of the proteins that surrounds the polypeptide exit tunnel on the outside of the ribosome. Forms the main docking site for trigger factor binding to the ribosome. This chain is Large ribosomal subunit protein uL23, found in Cutibacterium acnes (strain DSM 16379 / KPA171202) (Propionibacterium acnes).